The chain runs to 404 residues: Cysteine desulfurase IscS (404 aa).

Pyridoxal 5'-phosphate contacts are provided by residues 75 to 76 (AT), Asn155, Gln183, and 203 to 205 (SAH). Position 206 is an N6-(pyridoxal phosphate)lysine (Lys206). Residue Thr243 participates in pyridoxal 5'-phosphate binding. Cys328 (cysteine persulfide intermediate) is an active-site residue. Position 328 (Cys328) interacts with [2Fe-2S] cluster.

The protein belongs to the class-V pyridoxal-phosphate-dependent aminotransferase family. NifS/IscS subfamily. As to quaternary structure, homodimer. Forms a heterotetramer with IscU, interacts with other sulfur acceptors. Requires pyridoxal 5'-phosphate as cofactor.

It localises to the cytoplasm. The enzyme catalyses (sulfur carrier)-H + L-cysteine = (sulfur carrier)-SH + L-alanine. The protein operates within cofactor biosynthesis; iron-sulfur cluster biosynthesis. Functionally, master enzyme that delivers sulfur to a number of partners involved in Fe-S cluster assembly, tRNA modification or cofactor biosynthesis. Catalyzes the removal of elemental sulfur atoms from cysteine to produce alanine. Functions as a sulfur delivery protein for Fe-S cluster synthesis onto IscU, an Fe-S scaffold assembly protein, as well as other S acceptor proteins. In Vibrio cholerae serotype O1 (strain M66-2), this protein is Cysteine desulfurase IscS.